A 182-amino-acid chain; its full sequence is MAVENKDARPGKALKKESQPLIIAKTPAEEQRLKLERLMRNPDKAAPIPEKPKEWNPRAPPEFVRDVMGSSAGAGSGEFHVYRHLRRREYQRQDFLERLSEKQKLDEEYKEKLIENQKAAEDRTAKRRKKREKLKQKKLMAKKAKMESQKEEDSEKSSSSSASEGEEKDDDAEVPSFIMGKR.

3 stretches are compositionally biased toward basic and acidic residues: residues 1–18 (MAVENKDARPGKALKKES), 27–43 (PAEEQRLKLERLMRNPD), and 114–124 (IENQKAAEDRT). Disordered stretches follow at residues 1 to 80 (MAVE…GEFH) and 114 to 182 (IENQ…MGKR). The required for RNA-binding stretch occupies residues 51-143 (KPKEWNPRAP…LKQKKLMAKK (93 aa)). Positions 99-157 (LSEKQKLDEEYKEKLIENQKAAEDRTAKRRKKREKLKQKKLMAKKAKMESQKEEDSEKS) form a coiled coil. Basic residues predominate over residues 125-143 (AKRRKKREKLKQKKLMAKK). The tract at residues 126–138 (KRRKKREKLKQKK) is required for nuclear localization. Residues 144 to 156 (AKMESQKEEDSEK) show a composition bias toward basic and acidic residues. Over residues 164 to 173 (EGEEKDDDAE) the composition is skewed to acidic residues.

Belongs to the PRKRIP1 family. In terms of assembly, component of the pre-catalytic and post-catalytic spliceosome complexes.

The protein resides in the nucleus. It is found in the nucleolus. Its function is as follows. Required for pre-mRNA splicing as component of the spliceosome. Binds double-stranded RNA. The sequence is that of PRKR-interacting protein 1 homolog (prkrip1) from Danio rerio (Zebrafish).